A 3996-amino-acid polypeptide reads, in one-letter code: Probable E3 ubiquitin-protein ligase HECTD4 (3996 aa).

A helical membrane pass occupies residues 282–302 (TCIIRCILVVFQVVFKFFFSP). Polar residues predominate over residues 1494–1510 (PTASEPDTTLTKTSPKN). Disordered regions lie at residues 1494–1524 (PTAS…ESEA) and 1616–1637 (PETV…SICR). Residue Thr2080 is modified to Phosphothreonine. 4 disordered regions span residues 2219–2245 (FITS…DDIP), 2859–2919 (TSAT…PTVL), 3017–3053 (EDTK…STSS), and 3327–3403 (FDKS…QEVP). Acidic residues predominate over residues 2232–2245 (ADDESDDDDDDDIP). Low complexity predominate over residues 2866-2887 (LSDSSSSSSSSPGQTPQSPSLL). A compositionally biased stretch (basic residues) spans 2888 to 2897 (SKRKKVKMKR). Basic and acidic residues-rich tracts occupy residues 3017-3037 (EDTK…EPEK), 3327-3341 (FDKS…EQHP), and 3370-3403 (LSEK…QEVP). The region spanning 3627 to 3996 (SGGDPTYAFN…IHYREDPLSG (370 aa)) is the HECT domain. Catalysis depends on Cys3964, which acts as the Glycyl thioester intermediate.

The protein localises to the membrane. The enzyme catalyses S-ubiquitinyl-[E2 ubiquitin-conjugating enzyme]-L-cysteine + [acceptor protein]-L-lysine = [E2 ubiquitin-conjugating enzyme]-L-cysteine + N(6)-ubiquitinyl-[acceptor protein]-L-lysine.. It participates in protein modification; protein ubiquitination. Functionally, E3 ubiquitin-protein ligase which accepts ubiquitin from an E2 ubiquitin-conjugating enzyme in the form of a thioester and then directly transfers the ubiquitin to targeted substrates. This is Probable E3 ubiquitin-protein ligase HECTD4 (HECTD4) from Homo sapiens (Human).